The following is a 1482-amino-acid chain: Cystic fibrosis transmembrane conductance regulator (1482 aa).

Topologically, residues 1 to 77 are cytoplasmic; sequence MQRSPLEKAS…KLINALRRCF (77 aa). Residues 78-98 traverse the membrane as a helical segment; the sequence is FWRFTFYGIILYLGEVTKAVQ. Positions 81–365 constitute an ABC transmembrane type-1 1 domain; sequence FTFYGIILYL…WAVQTWYDSL (285 aa). At 99-122 the chain is on the extracellular side; that stretch reads PLLLGRIIASYDPDNKVERSIAIY. The chain crosses the membrane as a helical span at residues 123 to 146; it reads LAVGLCLLFVVRTLLLHPAIFGLH. At 147 to 195 the chain is on the cytoplasmic side; the sequence is HIGMQMRIAMFSLIYKKTLKLSSRVLDKISIGQLVSLLSNNLNKFDEGL. Residues 196–216 form a helical membrane-spanning segment; sequence ALAHFVWIAPLQVTLLMGLLW. Residues 217-222 lie on the Extracellular side of the membrane; it reads DLLQAS. Residues 223-243 form a helical membrane-spanning segment; the sequence is AFSGLGVLIILACFQAGFGRM. At 244-298 the chain is on the cytoplasmic side; sequence MMKYRDQRAGKINERLVITSEMIENIQSVKAYCWEEALEKMIENFRQSELRLTRK. Residues 299-319 form a helical membrane-spanning segment; that stretch reads AAYVRYFNSSAFFFSGFFVVF. Over 320–339 the chain is Extracellular; the sequence is LSVLPYALIKGIILRKIFTT. Residues 340–358 traverse the membrane as a helical segment; that stretch reads ISFCIVLRMAVTRQFPWAV. The Cytoplasmic portion of the chain corresponds to 359-859; it reads QTWYDSLGAI…YLRYITVHKR (501 aa). Residues W401, S434, 458 to 465, and Q493 each bind ATP; that span reads GSTGAGKT. One can recognise an ABC transporter 1 domain in the interval 423–646; it reads NVDNSLFFSN…RPDFSSKLMG (224 aa). C524 is lipidated: S-palmitoyl cysteine. Phosphoserine occurs at positions 549 and 660. The segment at 654-832 is disordered R region; that stretch reads SAERRNSIIT…EEINEEDLKE (179 aa). Position 670 is a phosphoserine; by PKA (S670). S686 bears the Phosphoserine mark. K688 is covalently cross-linked (Glycyl lysine isopeptide (Lys-Gly) (interchain with G-Cter in ubiquitin)). Phosphoserine occurs at positions 700 and 712. The residue at position 717 (T717) is a Phosphothreonine. Residues S737, S768, S796, and S814 each carry the phosphoserine modification. The chain crosses the membrane as a helical span at residues 860-880; the sequence is LIFVLIWCFVVFLIEVAASLV. An ABC transmembrane type-1 2 domain is found at 860–1156; sequence LIFVLIWCFV…AVNSSIDVDS (297 aa). At 881–919 the chain is on the extracellular side; that stretch reads LLCLLSKVSPEDKGNTTKSANDSSAVIITSTSSFYFLYI. N895 and N901 each carry an N-linked (GlcNAc...) asparagine glycan. Residues 920–940 form a discontinuously helical membrane-spanning segment; it reads YVGVADTFLALGLFRGLPLVH. The Cytoplasmic portion of the chain corresponds to 941 to 991; that stretch reads TLITVSKILHHKMLHSVLQAPMSTLNTLKAGGILNRFSKDIAILDDLLPLT. The helical transmembrane segment at 992–1012 threads the bilayer; it reads IFDFIQLLLIVIGAVAVVSIL. At 1013–1014 the chain is on the extracellular side; the sequence is KP. A helical transmembrane segment spans residues 1015 to 1035; it reads YIFLATVPVIVAFVLLRAYFL. The Cytoplasmic portion of the chain corresponds to 1036 to 1096; sequence HTSQQLKQLE…TANWFLYLST (61 aa). The helical transmembrane segment at 1097–1117 threads the bilayer; sequence LRWFQMRIEMIFVIFFIAVTF. Over 1118-1131 the chain is Extracellular; that stretch reads ISILTTGEGEGTVG. A helical transmembrane segment spans residues 1132 to 1152; the sequence is IILTLAMNIMSTLQWAVNSSI. The Cytoplasmic segment spans residues 1153–1482; the sequence is DVDSLMRSVS…TEEEVQDTRL (330 aa). In terms of domain architecture, ABC transporter 2 spans 1212–1445; sequence MTVKDLTAKY…KSLFRQAISP (234 aa). ATP-binding positions include Y1221 and 1246 to 1253; that span reads GRTGSGKS. The interval 1388-1482 is interaction with GORASP2; it reads RTLKQAFADC…TEEEVQDTRL (95 aa). C1397 carries S-palmitoyl cysteine lipidation. Position 1446 is a phosphoserine (S1446). The segment at 1450–1482 is disordered; it reads KLFPHQNSGKHKSRSKITALKEETEEEVQDTRL. Acidic residues predominate over residues 1472-1482; the sequence is ETEEEVQDTRL. The PDZ-binding signature appears at 1480–1482; it reads TRL.

Belongs to the ABC transporter superfamily. ABCC family. CFTR transporter (TC 3.A.1.202) subfamily. Monomer; does not require oligomerization for channel activity. May form oligomers in the membrane. Interacts with SLC26A3, SLC26A6 and NHERF1. Interacts with SHANK2. Interacts with MYO6. Interacts (via C-terminus) with GOPC (via PDZ domain); this promotes CFTR internalization and thereby decreases channel activity. Interacts with SLC4A7 through NHERF1. Found in a complex with MYO5B and RAB11A. Interacts with ANO1. Interacts with SLC26A8. Interacts with AHCYL1; the interaction increases CFTR activity. Interacts with CSE1L. The core-glycosylated form interacts with GORASP2 (via PDZ GRASP-type 1 domain) in respone to ER stress. Interacts with MARCHF2; the interaction leads to CFTR ubiqtuitination and degradation. Interacts with ADGRG2. N-glycosylated. In terms of processing, phosphorylated; cAMP treatment promotes phosphorylation and activates the channel. Dephosphorylation decreases the ATPase activity (in vitro). Phosphorylation at PKA sites activates the channel. Phosphorylation at PKC sites enhances the response to phosphorylation by PKA. Phosphorylated by AMPK; this inhibits channel activity. Post-translationally, ubiquitinated, leading to its degradation in the lysosome. Deubiquitination by USP10 in early endosomes enhances its endocytic recycling to the cell membrane. Ubiquitinated by RNF185 during ER stress. Ubiquitinated by MARCHF2.

The protein resides in the apical cell membrane. The protein localises to the early endosome membrane. It is found in the cell membrane. Its subcellular location is the recycling endosome membrane. It localises to the endoplasmic reticulum membrane. The protein resides in the nucleus. It catalyses the reaction ATP + H2O + closed Cl(-) channel = ADP + phosphate + open Cl(-) channel.. It carries out the reaction chloride(in) = chloride(out). The catalysed reaction is hydrogencarbonate(in) = hydrogencarbonate(out). The enzyme catalyses ATP + H2O = ADP + phosphate + H(+). In terms of biological role, epithelial ion channel that plays an important role in the regulation of epithelial ion and water transport and fluid homeostasis. Mediates the transport of chloride ions across the cell membrane. Possesses an intrinsic ATPase activity and utilizes ATP to gate its channel; the passive flow of anions through the channel is gated by cycles of ATP binding and hydrolysis by the ATP-binding domains. The ion channel is also permeable to HCO(3)(-); selectivity depends on the extracellular chloride concentration. Exerts its function also by modulating the activity of other ion channels and transporters. Contributes to the regulation of the pH and the ion content of the epithelial fluid layer. Modulates the activity of the epithelial sodium channel (ENaC) complex, in part by regulating the cell surface expression of the ENaC complex. May regulate bicarbonate secretion and salvage in epithelial cells by regulating the transporter SLC4A7. Can inhibit the chloride channel activity of ANO1. Plays a role in the chloride and bicarbonate homeostasis during sperm epididymal maturation and capacitation. The protein is Cystic fibrosis transmembrane conductance regulator of Dasypus novemcinctus (Nine-banded armadillo).